The following is a 337-amino-acid chain: Protein SphX (337 aa).

The signal sequence occupies residues 1-30; it reads MTTLKPALRRAAVLLPIAAVASSLFPIQEA.

Belongs to the PstS family. The N-terminus is blocked.

The protein localises to the cell inner membrane. Functionally, may be involved in the system for phosphate transport across the cytoplasmic membrane. The protein is Protein SphX (sphX) of Synechococcus elongatus (strain ATCC 33912 / PCC 7942 / FACHB-805) (Anacystis nidulans R2).